Here is a 115-residue protein sequence, read N- to C-terminus: U3-lycotoxin-Ls1q (115 aa).

The first 20 residues, 1 to 20 (MKFVLLFGVLLVTLFSYSSA), serve as a signal peptide directing secretion. Positions 21-44 (EMFDDFDQADEDELLSLIEKEEAR) are excised as a propeptide. 4 disulfide bridges follow: C48/C63, C55/C72, C62/C87, and C74/C85.

It belongs to the neurotoxin 19 (CSTX) family. 01 subfamily. Expressed by the venom gland.

It is found in the secreted. The protein is U3-lycotoxin-Ls1q of Lycosa singoriensis (Wolf spider).